An 809-amino-acid chain; its full sequence is Leucine-rich repeat and calponin homology domain-containing protein (809 aa).

The disordered stretch occupies residues 27–53; sequence GSASLPGSGTGSGSGIGHAGNTSSSTS. Residues 34-44 show a composition bias toward gly residues; the sequence is SGTGSGSGIGH. LRR repeat units lie at residues 72 to 96, 98 to 121, 122 to 144, 145 to 168, 170 to 189, 191 to 213, 214 to 236, 238 to 258, and 260 to 282; these read EAHFSGELILTNRKLKDFPRTGTKY, LTDTVIADLSRNRFAELPEEVTTF, AFLETLLLYHNTIRSIPESVKQL, SSLTYLDLRSNQLSSLPREICFLP, QVLLVSNNRLTSLPDELGRL, QTLTDLDASYNQLANLPARLGEL, RSLRSLSLRSNHLLYLPRELTCL, LISLDVSNNKIASLPLEIRHM, and TLVELQLENNPLTSPPASLCMRG. 3 disordered regions span residues 295–373, 423–442, and 490–550; these read TKDE…LHCV, LSYAHSNSSSNGSSPDQDDD, and KHPN…VDDV. Residues 319-336 show a composition bias toward polar residues; sequence HNSSGNVLEASTTGSTNN. The span at 351–368 shows a compositional bias: basic and acidic residues; sequence GLDKRWSHDAPTKSKTDS. The segment covering 518–532 has biased composition (polar residues); it reads NTLPKSIMKQNSNQI. Positions 662–776 constitute a Calponin-homology (CH) domain; sequence QREETELMSQ…TVGELFRLHG (115 aa). Positions 783–809 are disordered; the sequence is GNSSGAATPTKSPTRTTRATMSPTPLA. The segment covering 788-809 has biased composition (polar residues); that stretch reads AATPTKSPTRTTRATMSPTPLA.

It localises to the cytoplasm. The protein resides in the cytoskeleton. Its subcellular location is the cell cortex. It is found in the cleavage furrow. Its function is as follows. May play a role in the stabilization of the actin-rich cell cortex during cell division. In Drosophila melanogaster (Fruit fly), this protein is Leucine-rich repeat and calponin homology domain-containing protein.